The primary structure comprises 324 residues: Methenyltetrahydromethanopterin cyclohydrolase (324 aa).

This sequence belongs to the MCH family.

The protein resides in the cytoplasm. It carries out the reaction 5,10-methenyl-5,6,7,8-tetrahydromethanopterin + H2O = N(5)-formyl-5,6,7,8-tetrahydromethanopterin + H(+). It functions in the pathway one-carbon metabolism; formaldehyde degradation; formate from formaldehyde (H(4)MPT route): step 3/5. Its function is as follows. Catalyzes the hydrolysis of methenyl-H(4)MPT(+) to 5-formyl-H(4)MPT. The polypeptide is Methenyltetrahydromethanopterin cyclohydrolase (Methylobacterium nodulans (strain LMG 21967 / CNCM I-2342 / ORS 2060)).